A 489-amino-acid chain; its full sequence is Protein LMBR1L (489 aa).

Topologically, residues 1–21 (MEAADYEVLSVREQLFHDRVR) are extracellular. The tract at residues 1 to 59 (MEAADYEVLSVREQLFHDRVRECIISILLFATLYILCHIFLTRFKKPAEFTTVDDEDAT) is interaction with LGB. The tract at residues 1 to 76 (MEAADYEVLS…LCTFTLAVAL (76 aa)) is LCN1-binding. Residues 22-42 (ECIISILLFATLYILCHIFLT) traverse the membrane as a helical segment. At 43-66 (RFKKPAEFTTVDDEDATVNKIALE) the chain is on the cytoplasmic side. A helical membrane pass occupies residues 67–87 (LCTFTLAVALGAVLLLPFSII). The Extracellular portion of the chain corresponds to 88 to 114 (SNEVLLSLPRNYYIQWLNGSLIHGLWN). The chain crosses the membrane as a helical span at residues 115–135 (LVFLFSNLSLVFLMPFAYFFT). Topologically, residues 136-154 (ESEGFAGSRKGVLGRVYET) are cytoplasmic. Residues 155 to 175 (VVMLILLTLLVLGMVWVASAI) form a helical membrane-spanning segment. Residues 176 to 196 (VDNDKASRESLYDFWEYYLPY) lie on the Extracellular side of the membrane. The helical transmembrane segment at 197–217 (LYSCISFLGVLLLLVCTPLGL) threads the bilayer. Over 218–305 (ARMFSVTGKL…NLGYPLAMLC (88 aa)) the chain is Cytoplasmic. Residues 306–326 (LLVLTGLSVLIVAVHILELLI) form a helical membrane-spanning segment. At 327 to 350 (DEAAMPRGMQDAALGQASFSKLGS) the chain is on the extracellular side. A helical membrane pass occupies residues 351–371 (FGAIIQVVLIFYLMVSSVVGF). The Cytoplasmic portion of the chain corresponds to 372-388 (YSSPLFGSLRPRWHDTS). Residues 389-409 (MTQIIGNCVCLLVLSSALPVF) traverse the membrane as a helical segment. Residues 410-431 (SRTLGLTRFDLLGDFGRFNWLG) lie on the Extracellular side of the membrane. The chain crosses the membrane as a helical span at residues 432–452 (NFYIVFLYNAAFAGLTTLCLV). Residues 453 to 489 (KTFTAAVRAELIRAFGLDRLPLPVSGFPRASRKKQHQ) lie on the Cytoplasmic side of the membrane.

This sequence belongs to the LIMR family. In terms of assembly, dimer. Can also form higher oligomers. Interacts with LCN1; this interaction mediates the endocytosis of LCN1. Interacts with UBAC2, FAF2, VCP, AMFR, ZNRF3, CTNNB1, LRP6, GSK3B, FZD6, DVL2 and RNF43. Interacts with GSK3A. Interaction with LGB and SCGB1A1 is controversial. In terms of tissue distribution, highly expressed in the bone marrow, thymus, spleen and lymphocytes.

It is found in the cell membrane. It localises to the endoplasmic reticulum membrane. Functionally, plays an essential role in lymphocyte development by negatively regulating the canonical Wnt signaling pathway. In association with UBAC2 and E3 ubiquitin-protein ligase AMFR, promotes the ubiquitin-mediated degradation of CTNNB1 and Wnt receptors FZD6 and LRP6. LMBR1L stabilizes the beta-catenin destruction complex that is required for regulating CTNNB1 levels. Acts as a LCN1 receptor and can mediate its endocytosis. This Mus musculus (Mouse) protein is Protein LMBR1L (Lmbr1l).